Consider the following 89-residue polypeptide: MTVKPLGNRLLIKPITEERKTEGGIVLPDSAKEKPQKAEVKEVGKLDEDYDLKVGDKVIFSKYAGTEIKIDDEDYIIIDVEDVLAKVED.

This sequence belongs to the GroES chaperonin family. In terms of assembly, heptamer of 7 subunits arranged in a ring. Interacts with the chaperonin GroEL.

It localises to the cytoplasm. Functionally, together with the chaperonin GroEL, plays an essential role in assisting protein folding. The GroEL-GroES system forms a nano-cage that allows encapsulation of the non-native substrate proteins and provides a physical environment optimized to promote and accelerate protein folding. GroES binds to the apical surface of the GroEL ring, thereby capping the opening of the GroEL channel. The sequence is that of Co-chaperonin GroES from Petrotoga mobilis (strain DSM 10674 / SJ95).